The primary structure comprises 179 residues: Trypsin inhibitor (179 aa).

Residue Gln1 is modified to Pyrrolidone carboxylic acid. 2 disulfides stabilise this stretch: Cys40-Cys85 and Cys132-Cys143.

The protein belongs to the protease inhibitor I3 (leguminous Kunitz-type inhibitor) family. Heterodimer of an alpha and a beta chain linked by a disulfide bond. Abundant in dry seeds.

It localises to the secreted. Its function is as follows. Inhibits trypsin, plasmin, human plasma kallikrein, chymotrypsin and factor XIIa activity. In Leucaena leucocephala (White popinac), this protein is Trypsin inhibitor.